The following is a 633-amino-acid chain: Glutamyl-tRNA(Gln) amidotransferase subunit E (633 aa).

Residues 414-437 (ALPDGNTEYMRPLPGKARMYPETD) are disordered.

Belongs to the GatB/GatE family. GatE subfamily. In terms of assembly, heterodimer of GatD and GatE.

It carries out the reaction L-glutamyl-tRNA(Gln) + L-glutamine + ATP + H2O = L-glutaminyl-tRNA(Gln) + L-glutamate + ADP + phosphate + H(+). Allows the formation of correctly charged Gln-tRNA(Gln) through the transamidation of misacylated Glu-tRNA(Gln) in organisms which lack glutaminyl-tRNA synthetase. The reaction takes place in the presence of glutamine and ATP through an activated gamma-phospho-Glu-tRNA(Gln). The GatDE system is specific for glutamate and does not act on aspartate. The protein is Glutamyl-tRNA(Gln) amidotransferase subunit E of Pyrococcus abyssi (strain GE5 / Orsay).